The chain runs to 107 residues: MRFLVSVAFLLTVSSLLVSGENNNPVPEDPCSKEGGVCVAVDRCPDEYKKPGLCPKQKARGIDCCAIAPRDTCASRGGECTTLDCGRMEQKDVNHDCPPGTKCCVWV.

A signal peptide spans 1-20 (MRFLVSVAFLLTVSSLLVSG).

This sequence belongs to the scoloptoxin-19 family. In terms of processing, contains 6 disulfide bonds. Expressed by the venom gland.

It is found in the secreted. The chain is U-scoloptoxin(19)-Sm1a from Scolopendra morsitans (Tanzanian blue ringleg centipede).